The following is a 123-amino-acid chain: uncharacterized protein (123 aa).

2 disordered regions span residues 1-33 (MAPPGGKINRPRTELKKKLFKRRRVLSRDRRRK) and 82-123 (EKAA…EDKS). The span at 18-33 (KLFKRRRVLSRDRRRK) shows a compositional bias: basic residues.

This is an uncharacterized protein from Mus musculus (Mouse).